A 304-amino-acid chain; its full sequence is Aspartate carbamoyltransferase catalytic subunit (304 aa).

Carbamoyl phosphate contacts are provided by R49 and T50. K77 provides a ligand contact to L-aspartate. Residues R99, H127, and Q130 each coordinate carbamoyl phosphate. L-aspartate is bound by residues R160 and R211. Carbamoyl phosphate-binding residues include A250 and P251. At S303 the chain carries Phosphoserine.

This sequence belongs to the aspartate/ornithine carbamoyltransferase superfamily. ATCase family. Heterododecamer (2C3:3R2) of six catalytic PyrB chains organized as two trimers (C3), and six regulatory PyrI chains organized as three dimers (R2).

The enzyme catalyses carbamoyl phosphate + L-aspartate = N-carbamoyl-L-aspartate + phosphate + H(+). It participates in pyrimidine metabolism; UMP biosynthesis via de novo pathway; (S)-dihydroorotate from bicarbonate: step 2/3. In terms of biological role, catalyzes the condensation of carbamoyl phosphate and aspartate to form carbamoyl aspartate and inorganic phosphate, the committed step in the de novo pyrimidine nucleotide biosynthesis pathway. This chain is Aspartate carbamoyltransferase catalytic subunit, found in Bacillus subtilis (strain 168).